A 167-amino-acid chain; its full sequence is Male-specific protein scotti (167 aa).

3 N-linked (GlcNAc...) asparagine glycosylation sites follow: asparagine 30, asparagine 124, and asparagine 148.

It belongs to the male-specific scotti family.

Post-meiotically transcribed gene that has a role in late spermiogenesis; required for actin cone progression during spermatid individualization. The polypeptide is Male-specific protein scotti (Drosophila ananassae (Fruit fly)).